The sequence spans 503 residues: ATP synthase subunit alpha (503 aa).

170 to 177 provides a ligand contact to ATP; it reads GDRATGKT.

This sequence belongs to the ATPase alpha/beta chains family. F-type ATPases have 2 components, CF(1) - the catalytic core - and CF(0) - the membrane proton channel. CF(1) has five subunits: alpha(3), beta(3), gamma(1), delta(1), epsilon(1). CF(0) has three main subunits: a(1), b(2) and c(9-12). The alpha and beta chains form an alternating ring which encloses part of the gamma chain. CF(1) is attached to CF(0) by a central stalk formed by the gamma and epsilon chains, while a peripheral stalk is formed by the delta and b chains.

The protein resides in the cell inner membrane. The enzyme catalyses ATP + H2O + 4 H(+)(in) = ADP + phosphate + 5 H(+)(out). In terms of biological role, produces ATP from ADP in the presence of a proton gradient across the membrane. The alpha chain is a regulatory subunit. In Aquifex aeolicus (strain VF5), this protein is ATP synthase subunit alpha.